The sequence spans 192 residues: FMN-dependent NADH:quinone oxidoreductase 1 (192 aa).

Residues Ser-9 and 15 to 17 (SYS) each bind FMN.

It belongs to the azoreductase type 1 family. As to quaternary structure, homodimer. FMN serves as cofactor.

It carries out the reaction 2 a quinone + NADH + H(+) = 2 a 1,4-benzosemiquinone + NAD(+). The catalysed reaction is N,N-dimethyl-1,4-phenylenediamine + anthranilate + 2 NAD(+) = 2-(4-dimethylaminophenyl)diazenylbenzoate + 2 NADH + 2 H(+). Its function is as follows. Quinone reductase that provides resistance to thiol-specific stress caused by electrophilic quinones. Functionally, also exhibits azoreductase activity. Catalyzes the reductive cleavage of the azo bond in aromatic azo compounds to the corresponding amines. The polypeptide is FMN-dependent NADH:quinone oxidoreductase 1 (Colwellia psychrerythraea (strain 34H / ATCC BAA-681) (Vibrio psychroerythus)).